A 423-amino-acid chain; its full sequence is D-tagatose-1,6-bisphosphate aldolase subunit GatZ (423 aa).

This sequence belongs to the GatZ/KbaZ family. GatZ subfamily. As to quaternary structure, forms a complex with GatY.

It participates in carbohydrate metabolism; D-tagatose 6-phosphate degradation; D-glyceraldehyde 3-phosphate and glycerone phosphate from D-tagatose 6-phosphate: step 2/2. Functionally, component of the tagatose-1,6-bisphosphate aldolase GatYZ that is required for full activity and stability of the Y subunit. Could have a chaperone-like function for the proper and stable folding of GatY. When expressed alone, GatZ does not show any aldolase activity. Is involved in the catabolism of galactitol. The protein is D-tagatose-1,6-bisphosphate aldolase subunit GatZ of Salmonella typhimurium (strain LT2 / SGSC1412 / ATCC 700720).